The primary structure comprises 279 residues: MRDLQARIIHELNVRATIDPAAEVVERVDFLVRYVRAAGASGFVLGVSGGQDSSLAGRLCQLAVERLAEQGVAAEFIAVRLPYAVQNDEDDAQLALSFIRPERTVAVNIQRGVEGVGNEYRDALGEDMTDFAKGNVKARVRMVAQYAIAGQRRLLVVGTDHAAEAVTGFYTKYGDGGADLLPLSGLSKRQGRALLQHLGAPARLYEKAPTADLLDQSPGQTDEANLGLRYSDIDDFLEGKDVAEKVAIAIEARYLATEHKRRVPASMFDDWWTGGGFGR.

ATP is bound at residue 46–53; the sequence is GVSGGQDS. A Mg(2+)-binding site is contributed by aspartate 52. Position 139 (arginine 139) interacts with deamido-NAD(+). Threonine 159 lines the ATP pocket. Glutamate 164 lines the Mg(2+) pocket. The deamido-NAD(+) site is built by lysine 172 and aspartate 179. ATP is bound by residues lysine 188 and threonine 210. Residue 259 to 260 coordinates deamido-NAD(+); sequence HK.

It belongs to the NAD synthetase family. As to quaternary structure, homodimer.

It carries out the reaction deamido-NAD(+) + NH4(+) + ATP = AMP + diphosphate + NAD(+) + H(+). It functions in the pathway cofactor biosynthesis; NAD(+) biosynthesis; NAD(+) from deamido-NAD(+) (ammonia route): step 1/1. Catalyzes the ATP-dependent amidation of deamido-NAD to form NAD. Uses ammonia as a nitrogen source. This chain is NH(3)-dependent NAD(+) synthetase, found in Leifsonia xyli subsp. xyli (strain CTCB07).